Consider the following 677-residue polypeptide: UvrABC system protein B (677 aa).

The Helicase ATP-binding domain occupies aspartate 25–arginine 412. ATP is bound at residue glycine 38–threonine 45. The short motif at tyrosine 91–isoleucine 114 is the Beta-hairpin element. The region spanning glutamine 429–alanine 591 is the Helicase C-terminal domain. In terms of domain architecture, UVR spans proline 639–lysine 674.

It belongs to the UvrB family. As to quaternary structure, forms a heterotetramer with UvrA during the search for lesions. Interacts with UvrC in an incision complex.

Its subcellular location is the cytoplasm. The UvrABC repair system catalyzes the recognition and processing of DNA lesions. A damage recognition complex composed of 2 UvrA and 2 UvrB subunits scans DNA for abnormalities. Upon binding of the UvrA(2)B(2) complex to a putative damaged site, the DNA wraps around one UvrB monomer. DNA wrap is dependent on ATP binding by UvrB and probably causes local melting of the DNA helix, facilitating insertion of UvrB beta-hairpin between the DNA strands. Then UvrB probes one DNA strand for the presence of a lesion. If a lesion is found the UvrA subunits dissociate and the UvrB-DNA preincision complex is formed. This complex is subsequently bound by UvrC and the second UvrB is released. If no lesion is found, the DNA wraps around the other UvrB subunit that will check the other stand for damage. In Prochlorococcus marinus (strain SARG / CCMP1375 / SS120), this protein is UvrABC system protein B.